The sequence spans 124 residues: Small ribosomal subunit protein uS12 (124 aa).

A 3-methylthioaspartic acid modification is found at D89. Residues 103-124 form a disordered region; sequence DTAGVKDRRQSRSKYGAKSPKE.

Belongs to the universal ribosomal protein uS12 family. In terms of assembly, part of the 30S ribosomal subunit. Contacts proteins S8 and S17. May interact with IF1 in the 30S initiation complex.

Its function is as follows. With S4 and S5 plays an important role in translational accuracy. In terms of biological role, interacts with and stabilizes bases of the 16S rRNA that are involved in tRNA selection in the A site and with the mRNA backbone. Located at the interface of the 30S and 50S subunits, it traverses the body of the 30S subunit contacting proteins on the other side and probably holding the rRNA structure together. The combined cluster of proteins S8, S12 and S17 appears to hold together the shoulder and platform of the 30S subunit. The protein is Small ribosomal subunit protein uS12 of Prochlorococcus marinus (strain NATL1A).